We begin with the raw amino-acid sequence, 342 residues long: Isopentenyl-diphosphate delta-isomerase (342 aa).

Residue 11–12 (RK) coordinates substrate. FMN is bound by residues Ser68, 69–71 (SMT), Ser99, and Asn127. 99 to 101 (SMR) lines the substrate pocket. Gln162 contributes to the substrate binding site. Glu163 contributes to the Mg(2+) binding site. FMN-binding positions include Lys194, Thr224, 274–276 (GLK), and 295–296 (AG).

It belongs to the IPP isomerase type 2 family. As to quaternary structure, homooctamer. Dimer of tetramers. The cofactor is FMN. NADPH is required as a cofactor. Mg(2+) serves as cofactor.

Its subcellular location is the cytoplasm. The enzyme catalyses isopentenyl diphosphate = dimethylallyl diphosphate. Functionally, involved in the biosynthesis of isoprenoids. Catalyzes the 1,3-allylic rearrangement of the homoallylic substrate isopentenyl (IPP) to its allylic isomer, dimethylallyl diphosphate (DMAPP). In Rickettsia peacockii (strain Rustic), this protein is Isopentenyl-diphosphate delta-isomerase.